The chain runs to 498 residues: ATP synthase subunit beta, chloroplastic (498 aa).

172–179 (GGAGVGKT) contributes to the ATP binding site.

This sequence belongs to the ATPase alpha/beta chains family. In terms of assembly, F-type ATPases have 2 components, CF(1) - the catalytic core - and CF(0) - the membrane proton channel. CF(1) has five subunits: alpha(3), beta(3), gamma(1), delta(1), epsilon(1). CF(0) has four main subunits: a(1), b(1), b'(1) and c(9-12).

Its subcellular location is the plastid. The protein resides in the chloroplast thylakoid membrane. The enzyme catalyses ATP + H2O + 4 H(+)(in) = ADP + phosphate + 5 H(+)(out). Produces ATP from ADP in the presence of a proton gradient across the membrane. The catalytic sites are hosted primarily by the beta subunits. The polypeptide is ATP synthase subunit beta, chloroplastic (Illicium oligandrum (Star anise)).